The sequence spans 397 residues: UDP-GlcNAc:betaGal beta-1,3-N-acetylglucosaminyltransferase 7 (397 aa).

Residues 1 to 6 (MSLWKK) lie on the Cytoplasmic side of the membrane. The helical transmembrane segment at 7–26 (TLYKSVCLALALLVAVTVFQ) threads the bilayer. Residues 27–397 (RSVTPGQFLQ…LTCSVKFQVL (371 aa)) lie on the Lumenal side of the membrane. N-linked (GlcNAc...) asparagine glycosylation is found at asparagine 84, asparagine 90, asparagine 210, and asparagine 387.

Belongs to the glycosyltransferase 31 family. Strongly expressed in placenta and colon. Moderately expressed in lung, stomach, small intestine and kidney. Very weakly expressed in cerebrum, cerebellum, heart and testis.

It is found in the golgi apparatus membrane. The protein operates within protein modification; protein glycosylation. Functionally, N-acetyl glucosamine (GlcNAc) transferase that catalyzes the transfer of GlcNAc via a beta1-&gt;3 linkage from UDP-GlcNAc to the non-reducing terminal galactose (Gal) in the linearly growing chain of N- and O-linked keratan sulfate proteoglycans. Cooperates with B4GALT4 galactosyltransferase and CHST6 and CHST1 sulfotransferases to construct and elongate mono- and disulfated disaccharide units [-&gt;3Galbeta1-&gt;4(6-sulfoGlcNAcbeta)1-&gt;] and [-&gt;3(6-sulfoGalbeta)1-&gt;4(6-sulfoGlcNAcbeta)1-&gt;] within keratan sulfate polymer. Involved in biosynthesis of N-linked keratan sulfate proteoglycans in cornea, with an impact on proteoglycan fibril organization and corneal transparency. May play a role in the maintenance of tissue architecture by suppressing cellular motility and invasion. This Mus musculus (Mouse) protein is UDP-GlcNAc:betaGal beta-1,3-N-acetylglucosaminyltransferase 7 (B3gnt7).